Here is a 207-residue protein sequence, read N- to C-terminus: Vascular endothelial growth factor B (207 aa).

The N-terminal stretch at 1–21 is a signal peptide; the sequence is MSPLLRRLLLVALLQLARTQA. Intrachain disulfides connect C47–C89, C78–C122, and C82–C124. Basic and acidic residues predominate over residues 129 to 139; the sequence is KESAVKPDRVA. Positions 129–178 are disordered; it reads KESAVKPDRVAIPHHRPQPRSVPGWDSTPGASSPADIIHPTPAPGSSARL.

The protein belongs to the PDGF/VEGF growth factor family. In terms of assembly, homodimer; disulfide-linked. Can also form heterodimer with VEGF. Post-translationally, VEGF-B186 is O-glycosylated. In terms of tissue distribution, abundantly expressed in heart, brain, kidney and skeletal muscle.

The protein localises to the secreted. In terms of biological role, growth factor for endothelial cells. VEGF-B167 binds heparin and neuropilin-1 whereas the binding to neuropilin-1 of VEGF-B186 is regulated by proteolysis. VEGF-B seems to be required for normal heart function in adult but is not required for proper development of the cardiovascular system either during development or for angiogenesis in adults. The sequence is that of Vascular endothelial growth factor B (Vegfb) from Mus musculus (Mouse).